Reading from the N-terminus, the 606-residue chain is Threonine--tRNA ligase (606 aa).

The tract at residues 212-503 (DHRKLGVEMK…LIEHTAGELP (292 aa)) is catalytic. Residues Cys-304, His-355, and His-480 each coordinate Zn(2+).

It belongs to the class-II aminoacyl-tRNA synthetase family. As to quaternary structure, homodimer. It depends on Zn(2+) as a cofactor.

The protein resides in the cytoplasm. It carries out the reaction tRNA(Thr) + L-threonine + ATP = L-threonyl-tRNA(Thr) + AMP + diphosphate + H(+). In terms of biological role, catalyzes the attachment of threonine to tRNA(Thr) in a two-step reaction: L-threonine is first activated by ATP to form Thr-AMP and then transferred to the acceptor end of tRNA(Thr). Also edits incorrectly charged L-seryl-tRNA(Thr). This Campylobacter curvus (strain 525.92) protein is Threonine--tRNA ligase.